The following is a 130-amino-acid chain: MYRALTRDIEVTVEPYYLEEQSDPDDSRYVWGYRIVISNHSEIAVRLMTRYWHITDENGQVDEVSGPGVIGEQPLLNPGDTYEYSSGCPLDTPSGVMFGHYSMEAEDGETFNVAIPAFSLDSPGLVRTLN.

Residues Arg3 to Arg127 form the ApaG domain.

The sequence is that of Protein ApaG from Sinorhizobium fredii (strain NBRC 101917 / NGR234).